Consider the following 89-residue polypeptide: Defensin-like protein 197 (89 aa).

Positions 1–26 (MKFVSVFLVLFIFFLVVLEAPEKIEA) are cleaved as a signal peptide. Intrachain disulfides connect Cys-33–Cys-86, Cys-46–Cys-70, Cys-55–Cys-81, and Cys-59–Cys-83.

The protein belongs to the DEFL family. Protease inhibitor I18 (RTI/MTI-2) subfamily.

The protein resides in the secreted. The chain is Defensin-like protein 197 (ATTI6) from Arabidopsis thaliana (Mouse-ear cress).